We begin with the raw amino-acid sequence, 411 residues long: Receptor GIN3 (411 aa).

The Extracellular portion of the chain corresponds to 1-99 (MSGFVAGEEA…LLPILPHPRN (99 aa)). A helical membrane pass occupies residues 100–120 (IPIIVPLFCVFTVMTSLAVGL). Over 121–134 (RLWSRQKVAGGIRS) the chain is Cytoplasmic. A helical membrane pass occupies residues 135-155 (FDWLALAGFGLTIIYGAVSVY). The Extracellular segment spans residues 156-181 (HSKVSGPYQAFYDRTWDQMKENYKVY). A helical transmembrane segment spans residues 182–202 (LVLTIMYPFIMGLIKISLLLF). At 203–227 (YYRVATLNYVQWAVYATGSLTIANS) the chain is on the cytoplasmic side. The chain crosses the membrane as a helical span at residues 228 to 248 (IAAIITHCLAFMPIDFWNHFL). Residues 249–262 (QSPFKFNSRTPMLV) are Extracellular-facing. Residues 263 to 283 (FGAVYILTDVAILIIPMPMVF) form a helical membrane-spanning segment. Residues 284-292 (QLKLYPREK) are Cytoplasmic-facing. Residues 293–313 (VIAVIAFSLGGVACVASGFRI) traverse the membrane as a helical segment. The Extracellular segment spans residues 314 to 328 (WAIDEFQNYSGKNSS). Asn321 and Asn326 each carry an N-linked (GlcNAc...) asparagine glycan. Residues 329 to 349 (GLMIDAWTMIELNLTLICASA) traverse the membrane as a helical segment. Over 350-411 (PAIRALAIHY…QSPVIPKEVV (62 aa)) the chain is Cytoplasmic. Residues 371–411 (FSSSGATRGSKSAGSSGKSKTPESEKSMQVSQSPVIPKEVV) form a disordered region. Over residues 372-389 (SSSGATRGSKSAGSSGKS) the composition is skewed to low complexity.

Belongs to the SAT4 family. Interacts with guanine nucleotide-binding protein alpha GPA2; to activate adenylate cyclase and positively regulate nematode trap formation.

It localises to the cell membrane. Receptor that senses nematode-derived signals at the cell surface and signals via adenylate cyclase to positively regulate trap formation for nematode capture. The sequence is that of Receptor GIN3 from Arthrobotrys oligospora (strain ATCC 24927 / CBS 115.81 / DSM 1491) (Nematode-trapping fungus).